We begin with the raw amino-acid sequence, 1591 residues long: Rho guanine nucleotide exchange factor TIAM1 (1591 aa).

Residues 1 to 78 form a disordered region; that stretch reads MGNAESQHVE…AENGLEPFSQ (78 aa). Gly2 carries N-myristoyl glycine lipidation. Over residues 7 to 19 the composition is skewed to basic and acidic residues; the sequence is QHVEHEFYGEKHA. Over residues 20–49 the composition is skewed to basic residues; that stretch reads SLGRKHTSRSLRLSHKTRRTRHASSGKVIH. The span at 53 to 67 shows a compositional bias: low complexity; the sequence is EVSTRSSSTPSIPQS. Residue Ser231 is modified to Phosphoserine. Disordered regions lie at residues 298 to 379 and 393 to 422; these read SEGA…GDAA and MSTT…SPGQ. Composition is skewed to polar residues over residues 300 to 313 and 340 to 361; these read GATN…NSMQ and TTDT…SPTT. Phosphoserine occurs at positions 356 and 358. Over residues 367-377 the composition is skewed to low complexity; sequence GSDSGSSSTGD. Residues 412–422 show a composition bias toward polar residues; sequence QSSGTLSSPGQ. The PH 1 domain occupies 434-549; the sequence is VRKAGALAVK…TAIHSACATA (116 aa). Ser695 bears the Phosphoserine mark. Residues 765–832 form the RBD domain; that stretch reads TPSWFCLPNN…QPEEDIYELL (68 aa). Tyr829 is modified (phosphotyrosine; by NTRK2). Residues 845-908 form the PDZ domain; sequence SIHIEKSDTA…NNRAADALNS (64 aa). Residues 939–1034 form a disordered region; that stretch reads SPPHRVDGPA…TGPQLATMRQ (96 aa). Over residues 958–975 the composition is skewed to polar residues; it reads LTSNPGHSLCSEQGSSAE. A compositionally biased stretch (acidic residues) spans 977–990; that stretch reads APEETEGPDLESSD. The span at 1014-1024 shows a compositional bias: low complexity; the sequence is PSDQSPSPQDS. Polar residues predominate over residues 1025–1034; the sequence is TGPQLATMRQ. The region spanning 1040–1234 is the DH domain; sequence KLRKVICELL…NKVASHINEM (195 aa). The region spanning 1261–1397 is the PH 2 domain; sequence DLSMGDLLLH…KAVHSILRDK (137 aa). Tyr1323 is modified (phosphotyrosine). Residues Lys1404 and Lys1420 each participate in a glycyl lysine isopeptide (Lys-Gly) (interchain with G-Cter in ubiquitin) cross-link. The tract at residues 1456–1482 is disordered; that stretch reads TIDSDAVSASSPEKESQQPPGGGDTDR. Ser1519 carries the post-translational modification Phosphoserine.

It belongs to the TIAM family. In terms of assembly, component of the Par polarity complex, composed of at least phosphorylated PRKCZ, PARD3 and TIAM1. Interacts with NTRK2; mediates the activation of RAC1 by BDNF. Interacts with MAPK8IP2 and CD44. Interacts with BAIAP2. Interacts with EPHA8; regulates clathrin-mediated endocytosis of EPHA8. Interacts with PARD3. Interacts (via PDZ domain) with CNTNAP4, SDC1 and SDC3 (via C-terminus). Post-translationally, ubiquitinated. Undergoes 'Lys-48' ubiquitination at Lys-1404 and Lys-1420 by a CUL3(KBTBD6/7) E3 ubiquitin ligase complex composed of CUL3, RBX1, KBTBD6 and KBTBD7. 'Lys-48' ubiquitination at Lys-1404 and Lys-1420 triggers proteasomal degradation. Ubiquitination at Lys-1404 and Lys-1420 by CUL3(KBTBD6/7) also requires the membrane-associated protein GABARAP and may therefore be spatially restricted within the cell. Found in virtually all analyzed tumor cell lines including B- and T-lymphomas, neuroblastomas, melanomas and carcinomas.

Its subcellular location is the cell junction. The protein localises to the cell membrane. Functionally, guanyl-nucleotide exchange factor that activates RHO-like proteins and connects extracellular signals to cytoskeletal activities. Activates RAC1, CDC42, and to a lesser extent RHOA and their downstream signaling to regulate processes like cell adhesion and cell migration. In Homo sapiens (Human), this protein is Rho guanine nucleotide exchange factor TIAM1.